Reading from the N-terminus, the 307-residue chain is Small ribosomal subunit biogenesis GTPase RsgA (307 aa).

The CP-type G domain occupies 85-242 (RQDAWKTKLI…LIDSPGLQEF (158 aa)). Residues 135 to 138 (NKAD) and 184 to 192 (GQSGMGKST) contribute to the GTP site. Zn(2+)-binding residues include C266, C271, H273, and C279.

This sequence belongs to the TRAFAC class YlqF/YawG GTPase family. RsgA subfamily. In terms of assembly, monomer. Associates with 30S ribosomal subunit, binds 16S rRNA. The cofactor is Zn(2+).

It is found in the cytoplasm. One of several proteins that assist in the late maturation steps of the functional core of the 30S ribosomal subunit. Helps release RbfA from mature subunits. May play a role in the assembly of ribosomal proteins into the subunit. Circularly permuted GTPase that catalyzes slow GTP hydrolysis, GTPase activity is stimulated by the 30S ribosomal subunit. This Neisseria meningitidis serogroup C (strain 053442) protein is Small ribosomal subunit biogenesis GTPase RsgA.